We begin with the raw amino-acid sequence, 144 residues long: Transcriptional regulator SlyA (144 aa).

Residues 2-135 (ESPLGSDLAR…LIKLIAKLEH (134 aa)) form the HTH marR-type domain. Residues 49-72 (QIQLAKAIGIEQPSLVRTLDQLEE) constitute a DNA-binding region (H-T-H motif).

The protein belongs to the SlyA family. Homodimer.

In terms of biological role, transcription regulator that can specifically activate or repress expression of target genes. In Escherichia coli O127:H6 (strain E2348/69 / EPEC), this protein is Transcriptional regulator SlyA.